A 333-amino-acid chain; its full sequence is D-fructose 1,6-bisphosphatase class 2/sedoheptulose 1,7-bisphosphatase (333 aa).

Residues aspartate 33, glutamate 57, aspartate 85, and glutamate 88 each coordinate Mn(2+). Substrate-binding positions include 88–90 (EGT), tyrosine 119, 164–166 (RAR), and 186–188 (DGD). Residue glutamate 213 participates in Mn(2+) binding.

The protein belongs to the FBPase class 2 family. Homotetramer. Requires Mn(2+) as cofactor.

The enzyme catalyses beta-D-fructose 1,6-bisphosphate + H2O = beta-D-fructose 6-phosphate + phosphate. It catalyses the reaction D-sedoheptulose 1,7-bisphosphate + H2O = D-sedoheptulose 7-phosphate + phosphate. The protein operates within carbohydrate biosynthesis; Calvin cycle. Its function is as follows. Catalyzes the hydrolysis of fructose 1,6-bisphosphate (Fru 1,6-P2) and sedoheptulose 1,7-bisphosphate (Sed 1,7-P2) to fructose 6-phosphate and sedoheptulose 7-phosphate, respectively. In Prochlorococcus marinus (strain MIT 9515), this protein is D-fructose 1,6-bisphosphatase class 2/sedoheptulose 1,7-bisphosphatase.